A 137-amino-acid chain; its full sequence is MPTINQLVRKPRKSKVEKSKSPALNVGYNSLKRVPTNESAPQKRGVATRVGTMTPKKPNSALRKFARVRLSNLIEVTAYIPGIGHNLQEHSVVLLRGGRVKDLPGVRYHIVRGALDTAGVTDRKQGRSKYGTKKPKA.

The interval 1–57 (MPTINQLVRKPRKSKVEKSKSPALNVGYNSLKRVPTNESAPQKRGVATRVGTMTPKK) is disordered. A 3-methylthioaspartic acid modification is found at aspartate 102.

The protein belongs to the universal ribosomal protein uS12 family. In terms of assembly, part of the 30S ribosomal subunit. Contacts proteins S8 and S17. May interact with IF1 in the 30S initiation complex.

With S4 and S5 plays an important role in translational accuracy. In terms of biological role, interacts with and stabilizes bases of the 16S rRNA that are involved in tRNA selection in the A site and with the mRNA backbone. Located at the interface of the 30S and 50S subunits, it traverses the body of the 30S subunit contacting proteins on the other side and probably holding the rRNA structure together. The combined cluster of proteins S8, S12 and S17 appears to hold together the shoulder and platform of the 30S subunit. The protein is Small ribosomal subunit protein uS12 of Streptococcus gordonii (strain Challis / ATCC 35105 / BCRC 15272 / CH1 / DL1 / V288).